We begin with the raw amino-acid sequence, 1213 residues long: DNA-directed RNA polymerase subunit beta (1213 aa).

The tract at residues 1153-1213 is disordered; the sequence is RDMDEDSSEH…ADESDGKVSK (61 aa). A compositionally biased stretch (basic and acidic residues) spans 1171-1198; it reads MAEEQEKKKLAEETGKSENKEDSNETAD.

Belongs to the RNA polymerase beta chain family. The RNAP catalytic core consists of 2 alpha, 1 beta, 1 beta' and 1 omega subunit. When a sigma factor is associated with the core the holoenzyme is formed, which can initiate transcription.

The enzyme catalyses RNA(n) + a ribonucleoside 5'-triphosphate = RNA(n+1) + diphosphate. Functionally, DNA-dependent RNA polymerase catalyzes the transcription of DNA into RNA using the four ribonucleoside triphosphates as substrates. The sequence is that of DNA-directed RNA polymerase subunit beta from Lactobacillus acidophilus (strain ATCC 700396 / NCK56 / N2 / NCFM).